A 75-amino-acid chain; its full sequence is MKNKPDDRKDNVDKIQYNITKTIQNCELADEMIAKTDDEKTKKTLIEKNERRREALDGMREEIKDEARDKKNGYM.

The disordered stretch occupies residues 53 to 75 (REALDGMREEIKDEARDKKNGYM).

Belongs to the Tlp family.

The polypeptide is Protein Tlp homolog (Clostridium botulinum (strain Langeland / NCTC 10281 / Type F)).